We begin with the raw amino-acid sequence, 151 residues long: Cytochrome c oxidase-assembly factor COX23, mitochondrial (151 aa).

Residues 1 to 10 (MEKPSPTRRQ) constitute a mitochondrion transit peptide. The segment at 1 to 86 (MEKPSPTRRQ…QYYPDDPENP (86 aa)) is disordered. Over residues 7–18 (TRRQTSSLSTIS) the composition is skewed to polar residues. Residues 19–51 (NGMTMTNDNRDTTNTNSGSTSSNNSQPSSSSTP) show a composition bias toward low complexity. A CHCH domain is found at 101–143 (YDPCEESSKLSFQCLERNDYDRSKCQEYFDAYRECKKQWLTAR). 2 consecutive short sequence motifs (cx9C motif) follow at residues 104–114 (CEESSKLSFQC) and 125–135 (CQEYFDAYREC). Intrachain disulfides connect Cys-104/Cys-135 and Cys-114/Cys-125.

This sequence belongs to the COX23 family.

The protein localises to the cytoplasm. It localises to the mitochondrion intermembrane space. Its function is as follows. Required for the assembly of cytochrome c oxidase. The protein is Cytochrome c oxidase-assembly factor COX23, mitochondrial (COX23) of Saccharomyces cerevisiae (strain ATCC 204508 / S288c) (Baker's yeast).